The sequence spans 82 residues: uncharacterized protein (82 aa).

A run of 2 helical transmembrane segments spans residues 8–28 (LTTA…LPAP) and 50–70 (LYTL…YFVL).

It localises to the cell membrane. This is an uncharacterized protein from Escherichia coli (strain K12).